A 200-amino-acid polypeptide reads, in one-letter code: MKILVTGFDPFGGEKINPAIEAVKRLPDEIAGNQIIKLEVPTIFYQSAEVVKKAIEKENPEMVINVGQAGGRSAITPERIAINFQAGSTPDNSGKGPKEGKIQADGLDGYFTQLPIKKMVAAIRHAGLPAQVSNSAGTYVCNHLFYEIQYLIHHDYPNLKAGFIHIPYLPSQARNGRYPSMSLDNMVTGLTVAIETAAMC.

Catalysis depends on residues E78, C141, and H165.

Belongs to the peptidase C15 family. In terms of assembly, homotetramer.

The protein resides in the cytoplasm. It catalyses the reaction Release of an N-terminal pyroglutamyl group from a polypeptide, the second amino acid generally not being Pro.. In terms of biological role, removes 5-oxoproline from various penultimate amino acid residues except L-proline. In Lactobacillus helveticus (strain DPC 4571), this protein is Pyrrolidone-carboxylate peptidase.